The chain runs to 551 residues: DNA ligase (551 aa).

Glu-246 serves as a coordination point for ATP. The N6-AMP-lysine intermediate role is filled by Lys-248. ATP is bound by residues Arg-253, Arg-268, Glu-298, Phe-337, Arg-414, and Lys-420.

The protein belongs to the ATP-dependent DNA ligase family. The cofactor is Mg(2+).

It catalyses the reaction ATP + (deoxyribonucleotide)n-3'-hydroxyl + 5'-phospho-(deoxyribonucleotide)m = (deoxyribonucleotide)n+m + AMP + diphosphate.. DNA ligase that seals nicks in double-stranded DNA during DNA replication, DNA recombination and DNA repair. This chain is DNA ligase, found in Methanobrevibacter smithii (strain ATCC 35061 / DSM 861 / OCM 144 / PS).